The primary structure comprises 634 residues: Probable potassium transport system protein Kup (634 aa).

12 helical membrane-spanning segments follow: residues 21 to 41 (LVIG…LYTL), 58 to 78 (VLGI…LKYV), 110 to 130 (MYVV…DGVI), 147 to 167 (APKL…MLFL), 179 to 199 (AFGP…VYNM), 223 to 243 (WHAV…EALY), 258 to 278 (WQFV…ALVL), 296 to 316 (ALYP…QALI), 348 to 368 (IYVP…VIGF), 377 to 397 (AYGV…IIYA), 403 to 423 (VPAP…CAFF), and 427 to 447 (IIKF…LFTL).

This sequence belongs to the HAK/KUP transporter (TC 2.A.72) family.

The protein resides in the cell inner membrane. The catalysed reaction is K(+)(in) + H(+)(in) = K(+)(out) + H(+)(out). Functionally, transport of potassium into the cell. Likely operates as a K(+):H(+) symporter. The protein is Probable potassium transport system protein Kup of Xanthomonas axonopodis pv. citri (strain 306).